A 214-amino-acid polypeptide reads, in one-letter code: Histidine biosynthesis bifunctional protein HisIE (214 aa).

The phosphoribosyl-AMP cyclohydrolase stretch occupies residues 1-125; that stretch reads MPATALSLPL…ESIEPPPADT (125 aa). The interval 126-214 is phosphoribosyl-ATP pyrophosphohydrolase; sequence LSQVYNIVCQ…VYEQLQLRRR (89 aa).

This sequence in the N-terminal section; belongs to the PRA-CH family. In the C-terminal section; belongs to the PRA-PH family.

The protein localises to the cytoplasm. It carries out the reaction 1-(5-phospho-beta-D-ribosyl)-ATP + H2O = 1-(5-phospho-beta-D-ribosyl)-5'-AMP + diphosphate + H(+). The enzyme catalyses 1-(5-phospho-beta-D-ribosyl)-5'-AMP + H2O = 1-(5-phospho-beta-D-ribosyl)-5-[(5-phospho-beta-D-ribosylamino)methylideneamino]imidazole-4-carboxamide. It functions in the pathway amino-acid biosynthesis; L-histidine biosynthesis; L-histidine from 5-phospho-alpha-D-ribose 1-diphosphate: step 2/9. It participates in amino-acid biosynthesis; L-histidine biosynthesis; L-histidine from 5-phospho-alpha-D-ribose 1-diphosphate: step 3/9. The chain is Histidine biosynthesis bifunctional protein HisIE from Thermosynechococcus vestitus (strain NIES-2133 / IAM M-273 / BP-1).